The primary structure comprises 410 residues: LL-diaminopimelate aminotransferase (410 aa).

Positions 15 and 42 each coordinate substrate. Pyridoxal 5'-phosphate-binding positions include Tyr72, 108–109 (SK), Tyr132, Asn187, Tyr218, and 246–248 (SFS). 3 residues coordinate substrate: Lys109, Tyr132, and Asn187. The residue at position 249 (Lys249) is an N6-(pyridoxal phosphate)lysine. 2 residues coordinate pyridoxal 5'-phosphate: Arg257 and Asn292. Substrate contacts are provided by Asn292 and Arg388.

Belongs to the class-I pyridoxal-phosphate-dependent aminotransferase family. LL-diaminopimelate aminotransferase subfamily. As to quaternary structure, homodimer. Requires pyridoxal 5'-phosphate as cofactor.

It catalyses the reaction (2S,6S)-2,6-diaminopimelate + 2-oxoglutarate = (S)-2,3,4,5-tetrahydrodipicolinate + L-glutamate + H2O + H(+). It participates in amino-acid biosynthesis; L-lysine biosynthesis via DAP pathway; LL-2,6-diaminopimelate from (S)-tetrahydrodipicolinate (aminotransferase route): step 1/1. Its function is as follows. Involved in the synthesis of meso-diaminopimelate (m-DAP or DL-DAP), required for both lysine and peptidoglycan biosynthesis. Catalyzes the direct conversion of tetrahydrodipicolinate to LL-diaminopimelate. This Thermosynechococcus vestitus (strain NIES-2133 / IAM M-273 / BP-1) protein is LL-diaminopimelate aminotransferase.